Here is an 812-residue protein sequence, read N- to C-terminus: Lon protease (812 aa).

Residues 22-215 form the Lon N-terminal domain; it reads YAVLPLRDIV…KALSFMEAEI (194 aa). Residue 367-374 coordinates ATP; sequence GPPGVGKT. Positions 602 to 783 constitute a Lon proteolytic domain; sequence EDQVGVVTGL…GEVLKHALVR (182 aa). Residues Ser-689 and Lys-732 contribute to the active site. The segment at 787–812 is disordered; it reads PIEWTEQENPTAVPPVEDEAGASLAH.

This sequence belongs to the peptidase S16 family. As to quaternary structure, homohexamer. Organized in a ring with a central cavity.

It localises to the cytoplasm. The enzyme catalyses Hydrolysis of proteins in presence of ATP.. Its function is as follows. ATP-dependent serine protease that mediates the selective degradation of mutant and abnormal proteins as well as certain short-lived regulatory proteins. Required for cellular homeostasis and for survival from DNA damage and developmental changes induced by stress. Degrades polypeptides processively to yield small peptide fragments that are 5 to 10 amino acids long. Binds to DNA in a double-stranded, site-specific manner. This chain is Lon protease, found in Brucella melitensis biotype 1 (strain ATCC 23456 / CCUG 17765 / NCTC 10094 / 16M).